A 378-amino-acid polypeptide reads, in one-letter code: Protein-glutamate methylesterase/protein-glutamine glutaminase 2 (378 aa).

The Response regulatory domain occupies 4 to 121 (KVLVVDDSGF…SRNPEKVKQL (118 aa)). Asp55 bears the 4-aspartylphosphate mark. Residues 141–188 (APAPAAAPTPAPIPAAAPSSFGSHSAPARPAPAPAPTRAPAASASSPA) form a disordered region. Over residues 145–155 (AAAPTPAPIPA) the composition is skewed to pro residues. Low complexity-rich tracts occupy residues 156–168 (AAPS…SAPA) and 178–188 (RAPAASASSPA). Positions 187 to 378 (PAPKRKNYKL…IGKHIVEACV (192 aa)) constitute a CheB-type methylesterase domain. Active-site residues include Ser202, His229, and Asp322.

The protein belongs to the CheB family. Post-translationally, phosphorylated by CheA. Phosphorylation of the N-terminal regulatory domain activates the methylesterase activity.

It is found in the cytoplasm. It carries out the reaction [protein]-L-glutamate 5-O-methyl ester + H2O = L-glutamyl-[protein] + methanol + H(+). The enzyme catalyses L-glutaminyl-[protein] + H2O = L-glutamyl-[protein] + NH4(+). In terms of biological role, involved in chemotaxis. Part of a chemotaxis signal transduction system that modulates chemotaxis in response to various stimuli. Catalyzes the demethylation of specific methylglutamate residues introduced into the chemoreceptors (methyl-accepting chemotaxis proteins or MCP) by CheR. Also mediates the irreversible deamidation of specific glutamine residues to glutamic acid. The chain is Protein-glutamate methylesterase/protein-glutamine glutaminase 2 from Pseudomonas fluorescens (strain Pf0-1).